Here is a 101-residue protein sequence, read N- to C-terminus: Co-chaperonin GroES 1 (101 aa).

Belongs to the GroES chaperonin family. As to quaternary structure, heptamer of 7 subunits arranged in a ring. Interacts with the chaperonin GroEL.

It is found in the cytoplasm. Together with the chaperonin GroEL, plays an essential role in assisting protein folding. The GroEL-GroES system forms a nano-cage that allows encapsulation of the non-native substrate proteins and provides a physical environment optimized to promote and accelerate protein folding. GroES binds to the apical surface of the GroEL ring, thereby capping the opening of the GroEL channel. In Rhodopirellula baltica (strain DSM 10527 / NCIMB 13988 / SH1), this protein is Co-chaperonin GroES 1.